The chain runs to 97 residues: MPFKIFIITALIIVVLSMLAMLIRVILGPSLADRVVALDAIGLQLMAVIALFSILLNIKYMLVVILMVGILAFLGTAVFSKFMDEGKVIKHDSNDRH.

3 helical membrane-spanning segments follow: residues 3–23, 35–55, and 60–80; these read FKIF…AMLI, VVAL…FSIL, and YMLV…AVFS.

It belongs to the CPA3 antiporters (TC 2.A.63) subunit F family. May form a heterooligomeric complex that consists of seven subunits: mnhA1, mnhB1, mnhC1, mnhD1, mnhE1, mnhF1 and mnhG1.

It is found in the cell membrane. Functionally, mnh complex is a Na(+)/H(+) antiporter involved in Na(+) excretion. The sequence is that of Na(+)/H(+) antiporter subunit F1 (mnhF1) from Staphylococcus epidermidis (strain ATCC 35984 / DSM 28319 / BCRC 17069 / CCUG 31568 / BM 3577 / RP62A).